We begin with the raw amino-acid sequence, 146 residues long: Hemoglobin subunit beta-2 (146 aa).

In terms of domain architecture, Globin spans 2-146; it reads EWTNFERATI…VVSSLGKQYH (145 aa). Heme b-binding residues include H63 and H92.

It belongs to the globin family. As to quaternary structure, hb2 is a heterotetramer of two alpha chains and two beta-2 chains. In terms of tissue distribution, red blood cells.

Involved in oxygen transport from gills to the various peripheral tissues. In Cygnodraco mawsoni (Antarctic dragonfish), this protein is Hemoglobin subunit beta-2 (hbb2).